Reading from the N-terminus, the 340-residue chain is UDP-3-O-acylglucosamine N-acyltransferase (340 aa).

His238 (proton acceptor) is an active-site residue.

It belongs to the transferase hexapeptide repeat family. LpxD subfamily. In terms of assembly, homotrimer.

The catalysed reaction is a UDP-3-O-[(3R)-3-hydroxyacyl]-alpha-D-glucosamine + a (3R)-hydroxyacyl-[ACP] = a UDP-2-N,3-O-bis[(3R)-3-hydroxyacyl]-alpha-D-glucosamine + holo-[ACP] + H(+). The protein operates within bacterial outer membrane biogenesis; LPS lipid A biosynthesis. In terms of biological role, catalyzes the N-acylation of UDP-3-O-acylglucosamine using 3-hydroxyacyl-ACP as the acyl donor. Is involved in the biosynthesis of lipid A, a phosphorylated glycolipid that anchors the lipopolysaccharide to the outer membrane of the cell. This chain is UDP-3-O-acylglucosamine N-acyltransferase, found in Shewanella frigidimarina (strain NCIMB 400).